Reading from the N-terminus, the 1180-residue chain is DNA-directed RNA polymerase subunit beta (1180 aa).

The segment covering 1154 to 1164 has biased composition (acidic residues); it reads EMKELDDEDEQ. Residues 1154-1180 form a disordered region; the sequence is EMKELDDEDEQASDKLNLNIDSTESNV. The span at 1167–1180 shows a compositional bias: polar residues; that stretch reads DKLNLNIDSTESNV.

This sequence belongs to the RNA polymerase beta chain family. The RNAP catalytic core consists of 2 alpha, 1 beta, 1 beta' and 1 omega subunit. When a sigma factor is associated with the core the holoenzyme is formed, which can initiate transcription.

The catalysed reaction is RNA(n) + a ribonucleoside 5'-triphosphate = RNA(n+1) + diphosphate. Functionally, DNA-dependent RNA polymerase catalyzes the transcription of DNA into RNA using the four ribonucleoside triphosphates as substrates. The polypeptide is DNA-directed RNA polymerase subunit beta (Halalkalibacterium halodurans (strain ATCC BAA-125 / DSM 18197 / FERM 7344 / JCM 9153 / C-125) (Bacillus halodurans)).